The following is a 248-amino-acid chain: Probable transcriptional regulatory protein Noc_0137 (248 aa).

The protein belongs to the TACO1 family.

It localises to the cytoplasm. The polypeptide is Probable transcriptional regulatory protein Noc_0137 (Nitrosococcus oceani (strain ATCC 19707 / BCRC 17464 / JCM 30415 / NCIMB 11848 / C-107)).